A 246-amino-acid polypeptide reads, in one-letter code: Bis(5'-nucleosyl)-tetraphosphatase PrpE [asymmetrical] (246 aa).

This sequence belongs to the PrpE family. The cofactor is Ni(2+).

It carries out the reaction P(1),P(4)-bis(5'-guanosyl) tetraphosphate + H2O = GMP + GTP + 2 H(+). Its function is as follows. Asymmetrically hydrolyzes Ap4p to yield AMP and ATP. The protein is Bis(5'-nucleosyl)-tetraphosphatase PrpE [asymmetrical] of Bacillus anthracis (strain A0248).